Consider the following 253-residue polypeptide: MPDQTQQFSFKVLTINIHKGFTAFNRRFILPELRDAVRTVSADIVCLQEVMGAHEVHPLHVENWPDTSHYEFLADTMWSDFAYGRNAVYPEGHHGNAVLSRYPIEHYENRDVSVDGAEKRGVLYCRIVPPMTGKAIHVMCVHLGLREAHRQAQLAMLAEWVNELPDGEPVLVAGDFNDWRQKANHPLKVQAGLDEIFTRAHGRPARTFPVQFPLLRLDRIYVKNASASAPTALPLRTWRHLSDHAPLSAEIHL.

This is an uncharacterized protein from Escherichia coli O6:H1 (strain CFT073 / ATCC 700928 / UPEC).